Consider the following 273-residue polypeptide: 2,3,4,5-tetrahydropyridine-2,6-dicarboxylate N-succinyltransferase (273 aa).

2 residues coordinate substrate: R104 and D141.

It belongs to the transferase hexapeptide repeat family. Homotrimer.

The protein localises to the cytoplasm. The enzyme catalyses (S)-2,3,4,5-tetrahydrodipicolinate + succinyl-CoA + H2O = (S)-2-succinylamino-6-oxoheptanedioate + CoA. Its pathway is amino-acid biosynthesis; L-lysine biosynthesis via DAP pathway; LL-2,6-diaminopimelate from (S)-tetrahydrodipicolinate (succinylase route): step 1/3. The chain is 2,3,4,5-tetrahydropyridine-2,6-dicarboxylate N-succinyltransferase from Psychrobacter arcticus (strain DSM 17307 / VKM B-2377 / 273-4).